The following is a 279-amino-acid chain: Epidermal growth factor-like protein 7 (279 aa).

Positions 1-21 (MWGSGELLVAWFLVLAAGGTT) are cleaved as a signal peptide. The EMI domain maps to 28-109 (SRRVCTVGVS…TNGLPGACGA (82 aa)). 9 cysteine pairs are disulfide-bonded: Cys-32–Cys-94, Cys-57–Cys-63, Cys-93–Cys-107, Cys-112–Cys-122, Cys-116–Cys-128, Cys-130–Cys-139, Cys-146–Cys-157, Cys-153–Cys-166, and Cys-168–Cys-181. Residues 108–140 (GAAICQPPCGNEGSCIRPGRCRCPVGWQGDTCQ) enclose the EGF-like 1 domain. A Cell attachment site motif is present at residues 131 to 133 (PVG). Residues 142–182 (DVDECSTGEARCPQRCVNTVGSYWCQCWEGQSPSADGVLCL) enclose the EGF-like 2; calcium-binding domain. Coiled coils occupy residues 200-224 (SVVREEVYKLQARVDVLEQKLQLVL) and 250-274 (FQQLDRIDSLSEQVSFLEEQLGSCS).

In terms of assembly, interacts with ITGAV/ITGB3 in an RGD-dependent manner, increasing endothelial cell's motility.

It is found in the secreted. It localises to the extracellular space. In terms of biological role, regulates vascular tubulogenesis in vivo. Inhibits platelet-derived growth factor (PDGF)-BB-induced smooth muscle cell migration and promotes endothelial cell adhesion to the extracellular matrix and angiogenesis. This chain is Epidermal growth factor-like protein 7 (Egfl7), found in Rattus norvegicus (Rat).